We begin with the raw amino-acid sequence, 498 residues long: ATP synthase subunit beta, chloroplastic (498 aa).

172 to 179 (GGAGVGKT) provides a ligand contact to ATP.

This sequence belongs to the ATPase alpha/beta chains family. In terms of assembly, F-type ATPases have 2 components, CF(1) - the catalytic core - and CF(0) - the membrane proton channel. CF(1) has five subunits: alpha(3), beta(3), gamma(1), delta(1), epsilon(1). CF(0) has four main subunits: a(1), b(1), b'(1) and c(9-12).

It localises to the plastid. The protein localises to the chloroplast thylakoid membrane. The catalysed reaction is ATP + H2O + 4 H(+)(in) = ADP + phosphate + 5 H(+)(out). Produces ATP from ADP in the presence of a proton gradient across the membrane. The catalytic sites are hosted primarily by the beta subunits. In Canella winterana (Wild cinnamon), this protein is ATP synthase subunit beta, chloroplastic.